A 169-amino-acid chain; its full sequence is Allophycocyanin subunit beta-18 (169 aa).

N72 is subject to N4-methylasparagine. Residue C82 participates in (2R,3E)-phycocyanobilin binding.

Belongs to the phycobiliprotein family. As to quaternary structure, heterodimer of ApcE and this beta chain. In terms of processing, contains one covalently linked bilin chromophore.

It is found in the cellular thylakoid membrane. In terms of biological role, a variant beta-allophycocyanin (AP) which forms a complex with ApcE, a phycobilisome terminal emitter that influences energy transfer to photosystem II. The chain is Allophycocyanin subunit beta-18 (apcF) from Synechocystis sp. (strain ATCC 27184 / PCC 6803 / Kazusa).